Reading from the N-terminus, the 103-residue chain is Large ribosomal subunit protein bL21 (103 aa).

The protein belongs to the bacterial ribosomal protein bL21 family. As to quaternary structure, part of the 50S ribosomal subunit. Contacts protein L20.

In terms of biological role, this protein binds to 23S rRNA in the presence of protein L20. This Heliobacterium modesticaldum (strain ATCC 51547 / Ice1) protein is Large ribosomal subunit protein bL21.